The primary structure comprises 149 residues: Ribosomal RNA large subunit methyltransferase H (149 aa).

Residues L71, G98, and 117–122 (LSKMTL) each bind S-adenosyl-L-methionine.

It belongs to the RNA methyltransferase RlmH family. Homodimer.

Its subcellular location is the cytoplasm. It carries out the reaction pseudouridine(1915) in 23S rRNA + S-adenosyl-L-methionine = N(3)-methylpseudouridine(1915) in 23S rRNA + S-adenosyl-L-homocysteine + H(+). Functionally, specifically methylates the pseudouridine at position 1915 (m3Psi1915) in 23S rRNA. This Campylobacter fetus subsp. fetus (strain 82-40) protein is Ribosomal RNA large subunit methyltransferase H.